The chain runs to 266 residues: MSEPEVTYSTVRLHKSSGLQKLVRHEETQGPREVGNRKCSAPWQLIVKALGILCFLLLVTVAVLAVKIFQYNQHKQEINETLNHHHNCSNMQRAFNLKEEMLTNKSIDCRPSNETLEYIKREQDRWDSKTKTVLDSSRDTGRGVKYWFCYSTKCYYFIMNKTTWSGCKANCQHYSVPILKIEDEDELKFLQRHVIPENYWIGLSYDKKKKEWAWIDNGPSKLDMKIRKMNFKSRGCVFLSKARIEDIDCNIPYYCICGKKLDKFPD.

The Cytoplasmic portion of the chain corresponds to 1–48; the sequence is MSEPEVTYSTVRLHKSSGLQKLVRHEETQGPREVGNRKCSAPWQLIVK. Residues 49–69 traverse the membrane as a helical; Signal-anchor for type II membrane protein segment; the sequence is ALGILCFLLLVTVAVLAVKIF. Residues 70 to 266 lie on the Extracellular side of the membrane; the sequence is QYNQHKQEIN…CGKKLDKFPD (197 aa). N-linked (GlcNAc...) asparagine glycosylation is found at N79, N87, N104, and N113. The interval 147-151 is involved in dimerization; sequence WFCYS. C149 and C154 are joined by a disulfide. The 109-residue stretch at 150–258 folds into the C-type lectin domain; sequence YSTKCYYFIM…CNIPYYCICG (109 aa). The N-linked (GlcNAc...) asparagine glycan is linked to N160. Implicated in MHC class I binding regions lie at residues 160 to 162, 195 to 196, 207 to 208, 224 to 233, and 240 to 245; these read NKT, IP, KK, MKIRKMNFKS, and SKARIE. 3 disulfides stabilise this stretch: C167–C255, C171–C257, and C236–C249.

In terms of assembly, homodimer; disulfide-linked.

The protein localises to the membrane. Receptor on natural killer (NK) cells for class I MHC. This Mus musculus (Mouse) protein is Killer cell lectin-like receptor 3 (Klra3).